The sequence spans 93 residues: uncharacterized protein (93 aa).

The TRAM domain maps to 24-85 (QLQVGDTLKL…IQTQVGRLFF (62 aa)).

The protein belongs to the ycf81 family.

This is an uncharacterized protein from Thermus thermophilus.